Reading from the N-terminus, the 49-residue chain is Delta-actitoxin-Axm1h (49 aa).

Disulfide bonds link cysteine 4/cysteine 46, cysteine 6/cysteine 36, and cysteine 29/cysteine 47.

The protein belongs to the sea anemone sodium channel inhibitory toxin family. Type I subfamily.

It is found in the secreted. It localises to the nematocyst. Functionally, binds specifically to voltage-gated sodium channels (Nav) (site 3), thereby delaying their inactivation during signal transduction. Thus it may strongly stimulate mammalian cardiac muscle contraction. In Anthopleura xanthogrammica (Giant green sea anemone), this protein is Delta-actitoxin-Axm1h.